A 94-amino-acid chain; its full sequence is Probable Fe(2+)-trafficking protein (94 aa).

Belongs to the Fe(2+)-trafficking protein family.

In terms of biological role, could be a mediator in iron transactions between iron acquisition and iron-requiring processes, such as synthesis and/or repair of Fe-S clusters in biosynthetic enzymes. This Marinomonas sp. (strain MWYL1) protein is Probable Fe(2+)-trafficking protein.